A 522-amino-acid chain; its full sequence is N-acetylgalactosamine-6-sulfatase (522 aa).

The signal sequence occupies residues 1 to 25 (MAAVAAATRWHLLLVLSAAGLGVTG). Positions 27–379 (PQPPNILLLL…PAMLQGRLTE (353 aa)) are catalytic domain. Asp38, Asp39, and Cys78 together coordinate Ca(2+). Catalysis depends on Cys78, which acts as the Nucleophile. Cys78 carries the 3-oxoalanine (Cys) modification. Residue His141 is part of the active site. Asn203 carries N-linked (GlcNAc...) asparagine glycosylation. Residues Asp288 and Asn289 each contribute to the Ca(2+) site. Cysteines 308 and 419 form a disulfide. N-linked (GlcNAc...) asparagine glycosylation occurs at Asn423. 2 cysteine pairs are disulfide-bonded: Cys489–Cys518 and Cys501–Cys507.

Belongs to the sulfatase family. Homodimer. Ca(2+) serves as cofactor. Post-translationally, the conversion to 3-oxoalanine (also known as C-formylglycine, FGly), of a serine or cysteine residue in prokaryotes and of a cysteine residue in eukaryotes, is critical for catalytic activity.

The protein resides in the lysosome. The enzyme catalyses Hydrolysis of the 6-sulfate groups of the N-acetyl-D-galactosamine 6-sulfate units of chondroitin sulfate and of the D-galactose 6-sulfate units of keratan sulfate.. The polypeptide is N-acetylgalactosamine-6-sulfatase (GALNS) (Sus scrofa (Pig)).